The chain runs to 242 residues: NH(3)-dependent NAD(+) synthetase (242 aa).

27 to 34 (GISGGIDS) contributes to the ATP binding site. Aspartate 33 provides a ligand contact to Mg(2+). Arginine 109 is a binding site for deamido-NAD(+). Threonine 129 lines the ATP pocket. Glutamate 134 contacts Mg(2+). Deamido-NAD(+) contacts are provided by lysine 142 and aspartate 149. ATP is bound by residues lysine 158 and threonine 180. 231–232 (HK) lines the deamido-NAD(+) pocket.

The protein belongs to the NAD synthetase family. Homodimer.

The catalysed reaction is deamido-NAD(+) + NH4(+) + ATP = AMP + diphosphate + NAD(+) + H(+). Its pathway is cofactor biosynthesis; NAD(+) biosynthesis; NAD(+) from deamido-NAD(+) (ammonia route): step 1/1. Catalyzes the ATP-dependent amidation of deamido-NAD to form NAD. Uses ammonia as a nitrogen source. This chain is NH(3)-dependent NAD(+) synthetase, found in Thermoplasma volcanium (strain ATCC 51530 / DSM 4299 / JCM 9571 / NBRC 15438 / GSS1).